A 302-amino-acid polypeptide reads, in one-letter code: Galactofuranosyltransferase GlfT1 (302 aa).

This sequence belongs to the glycosyltransferase 2 family.

It is found in the cell membrane. The protein resides in the secreted. Its subcellular location is the cell wall. The catalysed reaction is alpha-L-rhamnosyl-(1-&gt;3)-N-acetyl-alpha-D-glucosaminyl-diphospho-trans,octa-cis-decaprenol + 2 UDP-alpha-D-galactofuranose = beta-D-galactofuranosyl-(1-&gt;5)-beta-D-galactofuranosyl-(1-&gt;4)-alpha-L-rhamnosyl-(1-&gt;3)-N-acetyl-alpha-D-glucosaminyl-diphospho-trans,octa-cis-decaprenol + 2 UDP + 2 H(+). Its pathway is cell wall biogenesis; cell wall polysaccharide biosynthesis. Functionally, involved in the biosynthesis of the arabinogalactan (AG) region of the mycolylarabinogalactan-peptidoglycan (mAGP) complex, an essential component of the mycobacterial cell wall. Catalyzes the transfer of the first two galactofuranosyl (Galf) units from UDP-galactofuranose (UDP-Galf) onto the rhamnosyl-GlcNAc-diphospho-decaprenol (Rha-GlcNAc-PP-C50) acceptor, yielding galactofuranosyl-galactofuranosyl-rhamnosyl-GlcNAc-diphospho-decaprenol (Galf-Galf-Rha-GlcNAc-PP-C50). Thus, GlfT1 is the initiator of galactan synthesis, while GlfT2 continues with the subsequent polymerization events. This chain is Galactofuranosyltransferase GlfT1, found in Mycolicibacterium smegmatis (strain ATCC 700084 / mc(2)155) (Mycobacterium smegmatis).